The sequence spans 194 residues: Thymidine kinase (194 aa).

ATP-binding positions include 15-22 (GCMFSGKT) and 88-91 (DELH). Glu89 acts as the Proton acceptor in catalysis. Positions 148, 151, 186, and 189 each coordinate Zn(2+).

The protein belongs to the thymidine kinase family. As to quaternary structure, homotetramer.

The protein localises to the cytoplasm. It carries out the reaction thymidine + ATP = dTMP + ADP + H(+). This chain is Thymidine kinase, found in Roseiflexus castenholzii (strain DSM 13941 / HLO8).